A 104-amino-acid polypeptide reads, in one-letter code: UPF0145 protein VIBHAR_02090 (104 aa).

Belongs to the UPF0145 family.

The chain is UPF0145 protein VIBHAR_02090 from Vibrio campbellii (strain ATCC BAA-1116).